We begin with the raw amino-acid sequence, 279 residues long: Hydroxyethylthiazole kinase (279 aa).

Methionine 58 provides a ligand contact to substrate. Residues lysine 134 and threonine 180 each contribute to the ATP site. Glycine 207 provides a ligand contact to substrate.

It belongs to the Thz kinase family. Requires Mg(2+) as cofactor.

It carries out the reaction 5-(2-hydroxyethyl)-4-methylthiazole + ATP = 4-methyl-5-(2-phosphooxyethyl)-thiazole + ADP + H(+). The protein operates within cofactor biosynthesis; thiamine diphosphate biosynthesis; 4-methyl-5-(2-phosphoethyl)-thiazole from 5-(2-hydroxyethyl)-4-methylthiazole: step 1/1. Functionally, catalyzes the phosphorylation of the hydroxyl group of 4-methyl-5-beta-hydroxyethylthiazole (THZ). The polypeptide is Hydroxyethylthiazole kinase (Methanoculleus marisnigri (strain ATCC 35101 / DSM 1498 / JR1)).